The primary structure comprises 525 residues: GMP synthase [glutamine-hydrolyzing] (525 aa).

Residues 9–207 (RILILDFGSQ…VHEICGCPAD (199 aa)) enclose the Glutamine amidotransferase type-1 domain. Cysteine 86 serves as the catalytic Nucleophile. Active-site residues include histidine 181 and glutamate 183. Residues 208 to 400 (WTPGNIVDDL…LGLPADMVYR (193 aa)) enclose the GMPS ATP-PPase domain. Position 235–241 (235–241 (SGGVDSS)) interacts with ATP.

In terms of assembly, homodimer.

It catalyses the reaction XMP + L-glutamine + ATP + H2O = GMP + L-glutamate + AMP + diphosphate + 2 H(+). It participates in purine metabolism; GMP biosynthesis; GMP from XMP (L-Gln route): step 1/1. In terms of biological role, catalyzes the synthesis of GMP from XMP. The protein is GMP synthase [glutamine-hydrolyzing] of Alkalilimnicola ehrlichii (strain ATCC BAA-1101 / DSM 17681 / MLHE-1).